We begin with the raw amino-acid sequence, 325 residues long: UPF0324 membrane protein Bd1437 (325 aa).

8 consecutive transmembrane segments (helical) span residues 21–43, 58–80, 87–105, 115–137, 144–166, 211–230, 243–260, and 302–324; these read IAAL…GIVL, YTHH…MVVG, IGYT…MLIG, STLI…APTI, VSVA…PWIG, ARAL…YFRG, PWFI…TWIP, and LQGV…IGWI.

The protein belongs to the UPF0324 family.

The protein resides in the cell membrane. This chain is UPF0324 membrane protein Bd1437, found in Bdellovibrio bacteriovorus (strain ATCC 15356 / DSM 50701 / NCIMB 9529 / HD100).